The following is a 760-amino-acid chain: Serine/threonine-protein kinase dkf-1 (760 aa).

2 consecutive Phorbol-ester/DAG-type zinc fingers follow at residues 103–153 (PHVV…GIIV) and 194–244 (PHTL…PSNC). Residues 316–444 (KNLEGWMIHF…QFIKESLQPP (129 aa)) enclose the PH domain. The region spanning 464-725 (VLSDKTLGSG…IEKCLEHGWL (262 aa)) is the Protein kinase domain. Residues 470–478 (LGSGQFGTV) and K493 each bind ATP. The Proton acceptor role is filled by D589. T626 is subject to Phosphothreonine.

This sequence belongs to the protein kinase superfamily. CAMK Ser/Thr protein kinase family. PKD subfamily. It depends on Mg(2+) as a cofactor. Post-translationally, prolonged phosphorylation at Thr-626 results in ubiquitination and degradation.

It localises to the cytoplasm. Its subcellular location is the membrane. It carries out the reaction L-seryl-[protein] + ATP = O-phospho-L-seryl-[protein] + ADP + H(+). The catalysed reaction is L-threonyl-[protein] + ATP = O-phospho-L-threonyl-[protein] + ADP + H(+). Its activity is regulated as follows. Activated by DAG and phorbol esters. Phorbol-ester/DAG-type domain 1 binds phorbol ester with high affinity and mediates accumulation at the cell periphery. Phorbol-ester/DAG-type domain 2 binds phorbol ester with low affinity but may mediate initial contact, resulting in a conformational change allowing previously occluded domain 1 to anchor the kinase. Phosphorylation on Thr-626 is then also required for activation and may also result in a further conformational change. Its function is as follows. Converts transient diacylglycerol (DAG) signals into prolonged physiological effects, independently of PKC. Role in the regulation of growth and neuromuscular control of movement. Involved in immune response to S.aureus bacterium by activating transcription factor hlh-30 downstream of phospholipase plc-1. In Caenorhabditis briggsae, this protein is Serine/threonine-protein kinase dkf-1.